The chain runs to 207 residues: FMN-dependent NADH:quinone oxidoreductase 2 (207 aa).

FMN is bound by residues Ser-10, 16–18 (SIS), 96–99 (MYNL), and 141–144 (SRGG).

Belongs to the azoreductase type 1 family. Homodimer. FMN is required as a cofactor.

The enzyme catalyses 2 a quinone + NADH + H(+) = 2 a 1,4-benzosemiquinone + NAD(+). It carries out the reaction N,N-dimethyl-1,4-phenylenediamine + anthranilate + 2 NAD(+) = 2-(4-dimethylaminophenyl)diazenylbenzoate + 2 NADH + 2 H(+). Functionally, quinone reductase that provides resistance to thiol-specific stress caused by electrophilic quinones. Its function is as follows. Also exhibits azoreductase activity. Catalyzes the reductive cleavage of the azo bond in aromatic azo compounds to the corresponding amines. This is FMN-dependent NADH:quinone oxidoreductase 2 from Trichormus variabilis (strain ATCC 29413 / PCC 7937) (Anabaena variabilis).